The chain runs to 347 residues: 5-deoxyribose 1-phosphate isomerase (347 aa).

Residues 48–50 (RGA), arginine 91, and glutamine 198 each bind substrate. Aspartate 239 serves as the catalytic Proton donor. Substrate is bound at residue 249–250 (NK).

Belongs to the EIF-2B alpha/beta/delta subunits family. DrdI subfamily.

It carries out the reaction 5-deoxy-alpha-D-ribose 1-phosphate = 5-deoxy-D-ribulose 1-phosphate. The protein operates within carbohydrate degradation. In terms of biological role, catalyzes the isomerization of 5-deoxy-alpha-D-ribose 1-phosphate to 5-deoxy-D-ribulose 1-phosphate, as part of a 5-deoxyribose salvage pathway that recycles this toxic radical SAM enzyme by-product to mainstream metabolites. This chain is 5-deoxyribose 1-phosphate isomerase, found in Bacillus cereus (strain ATCC 14579 / DSM 31 / CCUG 7414 / JCM 2152 / NBRC 15305 / NCIMB 9373 / NCTC 2599 / NRRL B-3711).